The primary structure comprises 231 residues: PIAGSMVLAAILLKLGGYGIIRMMQILPTTKTDMFLPFIVLALWGAILANLTCLQQTDLKSLIAYSSVSHMGLVVAAIIIQTPWGLSGAMALMIAHGFTSSALFCLANTTYERTHTRILILTRGFHNILPMTTTWWLLANLMNIATPPTMNFTSELLIMSALFNWCPTTIIMLGLSMLITASYSLHMFLSTQMGYPLLNSQTEPTHTREHLLMILHIIPLAMVSMKPELII.

The next 6 helical transmembrane spans lie at 1–21, 34–54, 63–85, 89–111, 128–148, and 156–176; these read PIAG…YGII, MFLP…LTCL, IAYS…TPWG, AMAL…NTTY, ILPM…ATPP, and LLIM…LGLS.

Belongs to the complex I subunit 4 family.

The protein localises to the mitochondrion membrane. It catalyses the reaction a ubiquinone + NADH + 5 H(+)(in) = a ubiquinol + NAD(+) + 4 H(+)(out). Its function is as follows. Core subunit of the mitochondrial membrane respiratory chain NADH dehydrogenase (Complex I) that is believed to belong to the minimal assembly required for catalysis. Complex I functions in the transfer of electrons from NADH to the respiratory chain. The immediate electron acceptor for the enzyme is believed to be ubiquinone. This chain is NADH-ubiquinone oxidoreductase chain 4 (MT-ND4), found in Trimeresurus stejnegeri (Chinese green tree viper).